Reading from the N-terminus, the 528-residue chain is Autophagy-related protein 22 (528 aa).

Topologically, residues 1–98 (MSYGTINDMN…IFVDTSSFAL (98 aa)) are cytoplasmic. Residues 99-119 (YVFSLSVLFQTIIVISVSGIV) traverse the membrane as a helical segment. At 120–130 (DLWGSVKFKGR) the chain is on the vacuolar side. The chain crosses the membrane as a helical span at residues 131 to 151 (ILVWFGIVGALSTVAISKLND). Residues 152–153 (TQ) are Cytoplasmic-facing. A helical membrane pass occupies residues 154-174 (IYSLAGLYIVANGCFGVINVV). Residues 175-210 (GNSLLPIFVKDSLKCQSQGAYEPDKVDSLTTVISGR) lie on the Vacuolar side of the membrane. The helical transmembrane segment at 211 to 231 (GASLGYSSALIVQIVSMFLVA) threads the bilayer. Over 232–241 (SKKGSKQDVQ) the chain is Cytoplasmic. Residues 242–262 (VAVLFVGIWWFVWQLPMIWLI) traverse the membrane as a helical segment. The Vacuolar segment spans residues 263-318 (DDVTIPIRVDDSTLASARSPYPGEQDALGQLNWKNYLSYGWVSLFESFKHARLLKD). Ser-278 bears the Phosphoserine mark. A helical transmembrane segment spans residues 319-339 (VMIFLIAWFIISDSITTINST). Topologically, residues 340 to 352 (AVLFSKAELHMST) are cytoplasmic. Residues 353-373 (LNLIMISVLTVVNAMLGAFMI) traverse the membrane as a helical segment. Residues 374-388 (PQFLATKFRWTSSQT) are Vacuolar-facing. Residues 389–409 (LMYIIIWASFIPFYGILGFFF) traverse the membrane as a helical segment. Residues 410-417 (NAFGLKHK) are Cytoplasmic-facing. A helical membrane pass occupies residues 418-438 (FEMFLLAIWYGLSLGGLSAVS). Residues 439–485 (RSVFSLIVPPGKESTFFSMFSITDKGSSILGPFLVGLLTDKTHNIRY) are Vacuolar-facing. A helical membrane pass occupies residues 486-506 (SFYFFFLLLMLSLPVLNCLDV). Over 507-528 (KRGRREAEELSQVLPESERRLD) the chain is Cytoplasmic.

Belongs to the ATG22 family.

It is found in the vacuole membrane. Functionally, vacuolar effluxer which mediate the efflux of leucine and other amino acids resulting from autophagic degradation. The release of autophagic amino acids allows the maintenance of protein synthesis and viability during nitrogen starvation. The protein is Autophagy-related protein 22 (ATG22) of Saccharomyces cerevisiae (strain ATCC 204508 / S288c) (Baker's yeast).